The sequence spans 47 residues: Delta-actitoxin-Aspp1b (47 aa).

3 cysteine pairs are disulfide-bonded: Cys4–Cys44, Cys6–Cys34, and Cys27–Cys45.

Belongs to the sea anemone sodium channel inhibitory toxin family. Type I subfamily.

The protein localises to the secreted. It localises to the nematocyst. In terms of biological role, binds specifically to voltage-gated sodium channels (Nav), thereby delaying their inactivation during signal transduction. Has a longer mammalian heart stimulation effect than Hk2a, Hk8a and Hk16a. This Anthopleura sp. (strain 'Zhanjiang') (Sea anemone) protein is Delta-actitoxin-Aspp1b.